The sequence spans 255 residues: uncharacterized protein (255 aa).

Positions 1-10 (MSDSIHRRKV) are enriched in basic residues. The interval 1–78 (MSDSIHRRKV…SPMRGLPMEE (78 aa)) is disordered. The segment covering 44–61 (VFERSFSEPSLNRHRDGQ) has biased composition (basic and acidic residues).

This is an uncharacterized protein from Arabidopsis thaliana (Mouse-ear cress).